We begin with the raw amino-acid sequence, 183 residues long: uncharacterized protein (183 aa).

This is an uncharacterized protein from Saccharolobus islandicus (Sulfolobus islandicus).